Consider the following 618-residue polypeptide: Serine/threonine-protein kinase TNNI3K (618 aa).

Gly-2 is lipidated: N-myristoyl glycine. Residues 21-51 (SESYVITIERLEDDLKIKEKELTELRNIFGS) are a coiled coil. 10 ANK repeats span residues 66-96 (NGLSLLHLCCICGGNKSHIRTLMLKGLRPSR), 100-129 (NGFTALHLAVYKDNAELITSLLHGGADIQQ), 133-162 (GGLTALHIATIAGHLEAADVLLQHGANVNI), 166-195 (VFFTPLHIAAYYGHEQVTRLLLKFGADVNV), 199-228 (VGDRPLHLASAKGFLNIAKLLMEEGSKADV), 234-263 (EDHVPLHFCSRFGHHDIVKYLLQNDLEVQP), 269-298 (YGDTPLHLACYNGKFEVAKEIIQISGTESL), 304-335 (FSETAFHSACTYGKSIDLVKFLLDQNVININH), 339-368 (DGHTGLHSACYHGHIHLVQFLLDNGADMNL), and 381-410 (DEQTCLMWAYEKGHDAIVTLLKHYKRPQDE). Residues 463–618 (IEFHEIIGSG…TAHTIYLLAP (156 aa)) enclose the Protein kinase domain. Residues 469–477 (IGSGSFGKV) and Lys-490 each bind ATP. Asp-588 serves as the catalytic Proton acceptor.

Belongs to the protein kinase superfamily. TKL Ser/Thr protein kinase family. MAP kinase kinase kinase subfamily. In terms of assembly, interacts with TNNI3, ACTC, ACTA1, MYBPC3, AIP, FABP3 and HADHB. It depends on Mg(2+) as a cofactor. Autophosphorylated.

It is found in the nucleus. The protein localises to the cytoplasm. It catalyses the reaction L-seryl-[protein] + ATP = O-phospho-L-seryl-[protein] + ADP + H(+). The catalysed reaction is L-threonyl-[protein] + ATP = O-phospho-L-threonyl-[protein] + ADP + H(+). May play a role in cardiac physiology. In Pongo abelii (Sumatran orangutan), this protein is Serine/threonine-protein kinase TNNI3K.